The primary structure comprises 156 residues: Rhombotin-1 (156 aa).

LIM zinc-binding domains lie at 22 to 84 and 86 to 148; these read KGCA…LFGT and GNCA…GHLN.

Expressed in the brain and not in the thymus.

Its subcellular location is the nucleus. Functionally, may be involved in gene regulation within neural lineage cells potentially by direct DNA binding or by binding to other transcription factors. The protein is Rhombotin-1 (Lmo1) of Mus musculus (Mouse).